We begin with the raw amino-acid sequence, 810 residues long: MEHKEVVLLLLLFLKSGQGEPLDDYVNTKGASLFSITKKQLGAGSIEECAAKCEEEEEFTCRSFQYHSKEQQCVIMAENRKSSIVFRMRDVVLFEKKVYLSECKTGNGKNYRGTMSKTRTGITCQKWSSTSPHRPTFSPATHPSEGLEENYCRNPDNDGQGPWCYTTDPEERFDYCDIPECEDECMHCSGENYDGKISKTMSGLECQAWDSQSPHAHGYIPSKFPNKNLKKNYCRNPDGEPRPWCFTTDPNKRWELCDIPRCTTPPPSSGPTYQCLKGTGENYRGDVAVTVSGHTCHGWSAQTPHTHNRTPENFPCKNLDENYCRNPDGEKAPWCYTTNSQVRWEYCKIPSCESSPVSTEPLDPTAPPELTPVVQECYHGDGQSYRGTSSTTTTGKKCQSWSSMTPHWHEKTPENFPNAGLTMNYCRNPDADKGPWCFTTDPSVRWEYCNLKKCSGTEGSVAAPPPVAQLPDAETPSEEDCMFGNGKGYRGKKATTVTGTPCQEWAAQEPHSHRIFTPETNPRAGLEKNYCRNPDGDVGGPWCYTTNPRKLFDYCDVPQCAASSFDCGKPQVEPKKCPGRVVGGCVAYPHSWPWQISLRTRLGMHFCGGTLISPEWVLTAAHCLEKSSRPSFYKVILGAHREVHLEPHVQEIEVSKMFSEPARADIALLKLSSPAIITDKVIPACLPSPNYVVADRTECFITGWGETQGTYGAGLLKEARLPVIENKVCNRYEFLNGTVKTTELCAGHLAGGTDSCQGDSGGPLVCFEKDKYILQGVTSWGLGCARPNKPGVYVRVSRFVTWIEGVMRNN.

The signal sequence occupies residues 1-19; the sequence is MEHKEVVLLLLLFLKSGQG. Residues 20–98 enclose the PAN domain; it reads EPLDDYVNTK…RDVVLFEKKV (79 aa). 12 cysteine pairs are disulfide-bonded: cysteine 49–cysteine 73, cysteine 53–cysteine 61, cysteine 103–cysteine 181, cysteine 124–cysteine 164, cysteine 152–cysteine 176, cysteine 185–cysteine 262, cysteine 188–cysteine 316, cysteine 206–cysteine 245, cysteine 234–cysteine 257, cysteine 275–cysteine 352, cysteine 296–cysteine 335, and cysteine 324–cysteine 347. Kringle domains follow at residues 103 to 181, 184 to 262, and 275 to 352; these read CKTG…IPEC, ECMH…IPRC, and CLKG…IPSC. The segment covering 125-141 has biased composition (polar residues); the sequence is QKWSSTSPHRPTFSPAT. The segment at 125 to 145 is disordered; that stretch reads QKWSSTSPHRPTFSPATHPSE. The L-lysine site is built by threonine 136, aspartate 158, and arginine 172. Threonine 365 is a glycosylation site (O-linked (GalNAc...) threonine). Intrachain disulfides connect cysteine 377/cysteine 454, cysteine 398/cysteine 437, cysteine 426/cysteine 449, cysteine 481/cysteine 560, cysteine 502/cysteine 543, cysteine 531/cysteine 555, cysteine 567/cysteine 685, cysteine 577/cysteine 585, and cysteine 607/cysteine 623. Kringle domains are found at residues 377–454 and 481–560; these read CYHG…LKKC and CMFG…VPQC. Aspartate 432 and arginine 445 together coordinate L-lysine. The region spanning 581-808 is the Peptidase S1 domain; that stretch reads VVGGCVAYPH…FVTWIEGVMR (228 aa). The residue at position 597 (serine 597) is a Phosphoserine. Active-site charge relay system residues include histidine 622 and aspartate 665. Serine 688 bears the Phosphoserine mark. 3 disulfide bridges follow: cysteine 699–cysteine 766, cysteine 729–cysteine 745, and cysteine 756–cysteine 784. Catalysis depends on serine 760, which acts as the Charge relay system.

This sequence belongs to the peptidase S1 family. Plasminogen subfamily. In terms of assembly, interacts with CSPG4 and AMOT. Interacts (via the Kringle domains) with HRG; the interaction tethers PLG to the cell surface and enhances its activation. Interacts (via Kringle 4 domain) with ADA; the interaction stimulates PLG activation when in complex with DPP4. Angiostatin: Interacts with ATP5F1A; the interaction inhibits most of the angiogenic effects of angiostatin. Post-translationally, in the presence of the inhibitor, the activation involves only cleavage after Arg-580, yielding two chains held together by two disulfide bonds. In the absence of the inhibitor, the activation involves additionally the removal of the activation peptide.

It localises to the secreted. The catalysed reaction is Preferential cleavage: Lys-|-Xaa &gt; Arg-|-Xaa, higher selectivity than trypsin. Converts fibrin into soluble products.. Its activity is regulated as follows. Converted into plasmin by plasminogen activators, both plasminogen and its activator being bound to fibrin. Activated with catalytic amounts of streptokinase. In terms of biological role, plasmin dissolves the fibrin of blood clots and acts as a proteolytic factor in a variety of other processes including embryonic development, tissue remodeling, tumor invasion, and inflammation. In ovulation, weakens the walls of the Graafian follicle. It activates the urokinase-type plasminogen activator, collagenases and several complement zymogens, such as C1, C4 and C5. Cleavage of fibronectin and laminin leads to cell detachment and apoptosis. Also cleaves fibrin, thrombospondin and von Willebrand factor. Its role in tissue remodeling and tumor invasion may be modulated by CSPG4. Binds to cells. In Macaca mulatta (Rhesus macaque), this protein is Plasminogen (PLG).